A 157-amino-acid chain; its full sequence is UPF0756 membrane protein BH3161 (157 aa).

4 consecutive transmembrane segments (helical) span residues 1 to 21 (MISQ…LAKN), 54 to 74 (LGVT…EIGF), 87 to 107 (WVAL…IDLL), and 117 to 137 (LVLG…GPLI).

It belongs to the UPF0756 family.

It localises to the cell membrane. In Halalkalibacterium halodurans (strain ATCC BAA-125 / DSM 18197 / FERM 7344 / JCM 9153 / C-125) (Bacillus halodurans), this protein is UPF0756 membrane protein BH3161.